The sequence spans 79 residues: MEEQVLSLLEELCEDEVVREDLDINLRDEGLLDSLGFVEMLVRMEEVFGFATAPTEVTYEEIDTPRRVMAYVKKRVAAL.

Positions 1–76 constitute a Carrier domain; sequence MEEQVLSLLE…RVMAYVKKRV (76 aa). Residue serine 34 is modified to O-(pantetheine 4'-phosphoryl)serine.

It belongs to the DltC family. Post-translationally, 4'-phosphopantetheine is transferred from CoA to a specific serine of apo-DCP.

The protein localises to the cytoplasm. Its pathway is cell wall biogenesis; lipoteichoic acid biosynthesis. Its function is as follows. Carrier protein involved in the D-alanylation of lipoteichoic acid (LTA). The loading of thioester-linked D-alanine onto DltC is catalyzed by D-alanine--D-alanyl carrier protein ligase DltA. The DltC-carried D-alanyl group is further transferred to cell membrane phosphatidylglycerol (PG) by forming an ester bond, probably catalyzed by DltD. D-alanylation of LTA plays an important role in modulating the properties of the cell wall in Gram-positive bacteria, influencing the net charge of the cell wall. This Abiotrophia defectiva (Streptococcus defectivus) protein is D-alanyl carrier protein.